We begin with the raw amino-acid sequence, 372 residues long: NADH-quinone oxidoreductase subunit D (372 aa).

It belongs to the complex I 49 kDa subunit family. NDH-1 is composed of 14 different subunits. Subunits NuoB, C, D, E, F, and G constitute the peripheral sector of the complex.

Its subcellular location is the cell inner membrane. The catalysed reaction is a quinone + NADH + 5 H(+)(in) = a quinol + NAD(+) + 4 H(+)(out). In terms of biological role, NDH-1 shuttles electrons from NADH, via FMN and iron-sulfur (Fe-S) centers, to quinones in the respiratory chain. The immediate electron acceptor for the enzyme in this species is believed to be ubiquinone. Couples the redox reaction to proton translocation (for every two electrons transferred, four hydrogen ions are translocated across the cytoplasmic membrane), and thus conserves the redox energy in a proton gradient. The protein is NADH-quinone oxidoreductase subunit D of Desulfotalea psychrophila (strain LSv54 / DSM 12343).